Reading from the N-terminus, the 41-residue chain is Large ribosomal subunit protein bL36 (41 aa).

Belongs to the bacterial ribosomal protein bL36 family.

The sequence is that of Large ribosomal subunit protein bL36 from Stenotrophomonas maltophilia (strain R551-3).